We begin with the raw amino-acid sequence, 87 residues long: Phosphocarrier protein HPr (87 aa).

The HPr domain occupies 1 to 87; the sequence is MASKDFHIVA…AETMTKEGLA (87 aa). H15 serves as the catalytic Pros-phosphohistidine intermediate. S46 carries the phosphoserine; by HPrK/P modification.

This sequence belongs to the HPr family.

Its subcellular location is the cytoplasm. Phosphorylation on Ser-46 inhibits the phosphoryl transfer from enzyme I to HPr. Functionally, general (non sugar-specific) component of the phosphoenolpyruvate-dependent sugar phosphotransferase system (sugar PTS). This major carbohydrate active-transport system catalyzes the phosphorylation of incoming sugar substrates concomitantly with their translocation across the cell membrane. The phosphoryl group from phosphoenolpyruvate (PEP) is transferred to the phosphoryl carrier protein HPr by enzyme I. Phospho-HPr then transfers it to the PTS EIIA domain. Its function is as follows. P-Ser-HPr interacts with the catabolite control protein A (CcpA), forming a complex that binds to DNA at the catabolite response elements cre, operator sites preceding a large number of catabolite-regulated genes. Thus, P-Ser-HPr is a corepressor in carbon catabolite repression (CCR), a mechanism that allows bacteria to coordinate and optimize the utilization of available carbon sources. P-Ser-HPr also plays a role in inducer exclusion, in which it probably interacts with several non-PTS permeases and inhibits their transport activity. The polypeptide is Phosphocarrier protein HPr (ptsH) (Streptococcus salivarius).